A 748-amino-acid polypeptide reads, in one-letter code: Catalase-peroxidase (748 aa).

The tryptophyl-tyrosyl-methioninium (Trp-Tyr) (with M-268) cross-link spans 91–242 (WHSAGTYRIG…LAAVQMGLIY (152 aa)). The Proton acceptor role is filled by H92. Residues 194 to 223 (DRYGKGKGSSSQGEIPADAHRHGQEQARTA) form a disordered region. Positions 242–268 (YVNPEGPEGNPDPLAAAHDIRETFARM) form a cross-link, tryptophyl-tyrosyl-methioninium (Tyr-Met) (with W-91). Residue H283 participates in heme b binding. The interval 288-310 (THGAGDAKHVGREPEGEDMDSQG) is disordered. Basic and acidic residues predominate over residues 290 to 301 (GAGDAKHVGREP).

Belongs to the peroxidase family. Peroxidase/catalase subfamily. In terms of assembly, homodimer or homotetramer. Requires heme b as cofactor. Post-translationally, formation of the three residue Trp-Tyr-Met cross-link is important for the catalase, but not the peroxidase activity of the enzyme.

It carries out the reaction H2O2 + AH2 = A + 2 H2O. The enzyme catalyses 2 H2O2 = O2 + 2 H2O. Its function is as follows. Bifunctional enzyme with both catalase and broad-spectrum peroxidase activity. The chain is Catalase-peroxidase from Herbaspirillum seropedicae.